The following is a 433-amino-acid chain: Glutamate-1-semialdehyde 2,1-aminomutase (433 aa).

K271 carries the post-translational modification N6-(pyridoxal phosphate)lysine.

Belongs to the class-III pyridoxal-phosphate-dependent aminotransferase family. HemL subfamily. In terms of assembly, homodimer. Requires pyridoxal 5'-phosphate as cofactor.

Its subcellular location is the cytoplasm. The enzyme catalyses (S)-4-amino-5-oxopentanoate = 5-aminolevulinate. It functions in the pathway porphyrin-containing compound metabolism; protoporphyrin-IX biosynthesis; 5-aminolevulinate from L-glutamyl-tRNA(Glu): step 2/2. Its pathway is porphyrin-containing compound metabolism; chlorophyll biosynthesis. The chain is Glutamate-1-semialdehyde 2,1-aminomutase from Prochlorococcus marinus (strain MIT 9301).